A 551-amino-acid polypeptide reads, in one-letter code: HTH-type transcriptional regulator SgrR (551 aa).

Residues 1–116 (MPSARLQQQF…LVSHLGRSFR (116 aa)) enclose the HTH marR-type domain. Residues 26–49 (LNELAALLSCSRRHMRTLLNTMQD) constitute a DNA-binding region (H-T-H motif). Positions 163–492 (ELEADIAHHW…IDWQADAARW (330 aa)) are solute-binding.

Its function is as follows. Activates the small RNA gene sgrS under glucose-phosphate stress conditions as well as yfdZ. Represses its own transcription under both stress and non-stress conditions. Might act as a sensor of the intracellular accumulation of phosphoglucose by binding these molecules in its C-terminal solute-binding domain. This chain is HTH-type transcriptional regulator SgrR, found in Shigella sonnei (strain Ss046).